Here is a 40-residue protein sequence, read N- to C-terminus: Sulfur globule protein TR0 (40 aa).

It to C.vinosum CV1 and CV2. As to quaternary structure, the protein envelope of the sulfur globules is composed of the three different proteins TR0, TR1 and TR2.

Structural protein of the sulfur globules, which are intracellular globules that serve for sulfur storage in purple sulfur bacteria. The polypeptide is Sulfur globule protein TR0 (Thiocapsa roseopersicina).